Here is a 183-residue protein sequence, read N- to C-terminus: Apo-citrate lyase phosphoribosyl-dephospho-CoA transferase (183 aa).

This sequence belongs to the CitX family.

The catalysed reaction is apo-[citrate lyase ACP] + 2'-(5''-triphospho-alpha-D-ribosyl)-3'-dephospho-CoA = holo-[citrate lyase ACP] + diphosphate. Its function is as follows. Transfers 2-(5''-triphosphoribosyl)-3'-dephosphocoenzyme-A on a serine residue to the apo-acyl carrier protein (gamma chain) of the citrate lyase to yield holo-acyl carrier protein. This Escherichia coli O9:H4 (strain HS) protein is Apo-citrate lyase phosphoribosyl-dephospho-CoA transferase.